A 447-amino-acid polypeptide reads, in one-letter code: MREILHIQGGQCGNQIGAKFWEVVCDEHGIDPTGRYTGTSDLQLERVNVYYNEASCGRFVPRAVLMDLEPGTMDSVRTGPYGQIFRPDNFVFGQSGAGNNWAKGHYTEGAELIDSVLDVVRKEAENCDCLQGFQVCHSLGGGTGSGMGTLLISKIREEYPDRMMLTFSVFPSPKVSDTVVEPYNATLSVHQLVENADECMVLDNEALYDICFRTLKLTTPSFGDLNHLISATMSGVTCCLRFPGQLNSDLRKLAVNLIPFPRLHFFMVGFAPLTSRGSQQYRALTVPELTQQMWDAKNMMCAADPRHGRYLTASAMFRGKMSTKEVDEQMINVQNKNSSYFVEWIPNNVKSSVCDIPPTGLSMASTFVGNSTSIQEMFRRVSEQFTSMFRRKAFLHWYTGEGMDEMEFTEAESNMNDLVSEYQQYQDATSDEEGEYEDEDQEPEEDM.

GTP-binding residues include Q11, E69, S138, G142, T143, G144, N204, and N226. Residue E69 coordinates Mg(2+). Over residues 419 to 428 (VSEYQQYQDA) the composition is skewed to polar residues. Residues 419–447 (VSEYQQYQDATSDEEGEYEDEDQEPEEDM) form a disordered region. A compositionally biased stretch (acidic residues) spans 429–447 (TSDEEGEYEDEDQEPEEDM).

The protein belongs to the tubulin family. Dimer of alpha and beta chains. A typical microtubule is a hollow water-filled tube with an outer diameter of 25 nm and an inner diameter of 15 nM. Alpha-beta heterodimers associate head-to-tail to form protofilaments running lengthwise along the microtubule wall with the beta-tubulin subunit facing the microtubule plus end conferring a structural polarity. Microtubules usually have 13 protofilaments but different protofilament numbers can be found in some organisms and specialized cells. Mg(2+) serves as cofactor.

The protein localises to the cytoplasm. Its subcellular location is the cytoskeleton. Functionally, tubulin is the major constituent of microtubules, a cylinder consisting of laterally associated linear protofilaments composed of alpha- and beta-tubulin heterodimers. Microtubules grow by the addition of GTP-tubulin dimers to the microtubule end, where a stabilizing cap forms. Below the cap, tubulin dimers are in GDP-bound state, owing to GTPase activity of alpha-tubulin. In Triticum aestivum (Wheat), this protein is Tubulin beta-2 chain (TUBB2).